The sequence spans 261 residues: Proliferating cell nuclear antigen (261 aa).

N6-acetyllysine is present on residues Lys14, Lys77, and Lys80. The DNA-binding element occupies 61-80 (RCDRNLAMGVNLTSMSKILK). A disulfide bridge links Cys135 with Cys162. A Glycyl lysine isopeptide (Lys-Gly) (interchain with G-Cter in SUMO2); alternate cross-link involves residue Lys164. Residue Lys164 forms a Glycyl lysine isopeptide (Lys-Gly) (interchain with G-Cter in ubiquitin); alternate linkage. A Phosphotyrosine; by EGFR modification is found at Tyr211. Lys248 bears the N6-acetyllysine mark. Residue Lys254 forms a Glycyl lysine isopeptide (Lys-Gly) (interchain with G-Cter in SUMO2) linkage.

Belongs to the PCNA family. In terms of assembly, homotrimer. Interacts with p300/EP300; the interaction occurs on chromatin in UV-irradiated damaged cells. Interacts with CREBBP (via transactivation domain and C-terminus); the interaction occurs on chromatin in UV-irradiated damaged cells. Directly interacts with POLD1, POLD3 and POLD4 subunits of the DNA polymerase delta complex, POLD3 being the major interacting partner; the interaction with POLD3 is inhibited by CDKN1A/p21(CIP1). Forms a complex with activator 1 heteropentamer in the presence of ATP. Interacts with EXO1, POLH, POLK, DNMT1, ERCC5, FEN1, CDC6 and POLDIP2. Interacts with POLB. Interacts with APEX2; this interaction is triggered by reactive oxygen species and increased by misincorporation of uracil in nuclear DNA. Forms a ternary complex with DNTTIP2 and core histone. Interacts with KCTD10 and PPP1R15A. Interacts with SMARCA5/SNF2H. Interacts with BAZ1B/WSTF; the interaction is direct and is required for BAZ1B/WSTF binding to replication foci during S phase. Interacts with HLTF and SHPRH. Interacts with NUDT15; this interaction is disrupted in response to UV irradiation and acetylation. Interacts with CDKN1A/p21(CIP1) and CDT1; interacts via their PIP-box which also recruits the DCX(DTL) complex. The interaction with CDKN1A inhibits POLD3 binding. Interacts with DDX11. Interacts with EGFR; positively regulates PCNA. Interacts with PARPBP. Interacts (when ubiquitinated) with SPRTN; leading to enhance RAD18-mediated PCNA ubiquitination. Interacts (when polyubiquitinated) with ZRANB3. Interacts with SMARCAD1. Interacts with CDKN1C. Interacts with PCLAF (via PIP-box). Interacts with RTEL1 (via PIP-box); the interaction is direct and essential for the suppression of telomere fragility. Interacts with FAM111A (via PIP-box); the interaction is direct and required for PCNA loading on chromatin binding. Interacts with LIG1. Interacts with SETMAR. Interacts with ANKRD17. Interacts with FBXO18/FBH1 (via PIP-box); the interaction recruits the DCX(DTL) complex and promotes ubiquitination and degradation of FBXO18/FBH1. Interacts with POLN. Interacts with SDE2 (via PIP-box); the interaction is direct and prevents ultraviolet light induced monoubiquitination. Component of the replisome complex composed of at least DONSON, MCM2, MCM7, PCNA and TICRR; interaction at least with PCNA occurs during DNA replication. Interacts with MAPK15; the interaction is chromatin binding dependent and prevents MDM2-mediated PCNA destruction by inhibiting the association of PCNA with MDM2. Interacts with PARP10 (via PIP-box). Interacts with DDI2. Interacts with HMCES (via PIP-box). Interacts with TRAIP (via PIP-box). Interacts with UHRF2. Interacts with ALKBH2; this interaction is enhanced during the S-phase of the cell cycle. Interacts with ATAD5; the interaction promotes USP1-mediated PCNA deubiquitination. Interacts (when phosphorylated) with GRB2. Interacts with nuclear UNG; this interaction mediates UNG recruitment to S-phase replication foci. Interacts with ERCC6L2 (via an atypical PIP-box); this interaction facilitates cenrtomeric localization of ERCC6L2. In terms of processing, phosphorylated. Phosphorylation at Tyr-211 by EGFR stabilizes chromatin-associated PCNA. Acetylated by CREBBP and p300/EP300; preferentially acetylated by CREBBP on Lys-80, Lys-13 and Lys-14 and on Lys-77 by p300/EP300 upon loading on chromatin in response to UV irradiation. Lysine acetylation disrupts association with chromatin, hence promoting PCNA ubiquitination and proteasomal degradation in response to UV damage in a CREBBP- and EP300-dependent manner. Acetylation disrupts interaction with NUDT15 and promotes degradation. Post-translationally, ubiquitinated. Following DNA damage, can be either monoubiquitinated to stimulate direct bypass of DNA lesions by specialized DNA polymerases or polyubiquitinated to promote recombination-dependent DNA synthesis across DNA lesions by template switching mechanisms. Following induction of replication stress, monoubiquitinated by the UBE2B-RAD18 complex on Lys-164, leading to recruit translesion (TLS) polymerases, which are able to synthesize across DNA lesions in a potentially error-prone manner. An error-free pathway also exists and requires non-canonical polyubiquitination on Lys-164 through 'Lys-63' linkage of ubiquitin moieties by the E2 complex UBE2N-UBE2V2 and the E3 ligases, HLTF, RNF8 and SHPRH. This error-free pathway, also known as template switching, employs recombination mechanisms to synthesize across the lesion, using as a template the undamaged, newly synthesized strand of the sister chromatid. Monoubiquitination at Lys-164 also takes place in undamaged proliferating cells, and is mediated by the DCX(DTL) complex, leading to enhance PCNA-dependent translesion DNA synthesis. Sumoylated during S phase. In terms of processing, methylated on glutamate residues by ARMT1.

The protein resides in the nucleus. Its function is as follows. Auxiliary protein of DNA polymerase delta and epsilon, is involved in the control of eukaryotic DNA replication by increasing the polymerase's processibility during elongation of the leading strand. Induces a robust stimulatory effect on the 3'-5' exonuclease and 3'-phosphodiesterase, but not apurinic-apyrimidinic (AP) endonuclease, APEX2 activities. Has to be loaded onto DNA in order to be able to stimulate APEX2. Plays a key role in DNA damage response (DDR) by being conveniently positioned at the replication fork to coordinate DNA replication with DNA repair and DNA damage tolerance pathways. Acts as a loading platform to recruit DDR proteins that allow completion of DNA replication after DNA damage and promote postreplication repair: Monoubiquitinated PCNA leads to recruitment of translesion (TLS) polymerases, while 'Lys-63'-linked polyubiquitination of PCNA is involved in error-free pathway and employs recombination mechanisms to synthesize across the lesion. In Bos taurus (Bovine), this protein is Proliferating cell nuclear antigen (PCNA).